The following is a 240-amino-acid chain: Aldehyde dehydrogenase, cytosolic 2 (240 aa).

Residues glutamate 8 and cysteine 42 contribute to the active site. Residues lysine 106, lysine 149, lysine 151, and lysine 174 each carry the N6-acetyllysine modification.

This sequence belongs to the aldehyde dehydrogenase family. In terms of assembly, homotetramer. As to expression, non-lens specific, predominant form expressed in the liver.

It localises to the cytoplasm. The catalysed reaction is an aldehyde + NAD(+) + H2O = a carboxylate + NADH + 2 H(+). Its pathway is alcohol metabolism; ethanol degradation; acetate from ethanol: step 2/2. Elephant shrews, in contrast to other mammals, possess both a lens- and a non-lens specific class-1 aldehyde dehydrogenase. Can convert/oxidize retinaldehyde to retinoic acid. The protein is Aldehyde dehydrogenase, cytosolic 2 of Macroscelides proboscideus (Short-eared elephant shrew).